Reading from the N-terminus, the 610-residue chain is Glutamine--fructose-6-phosphate aminotransferase [isomerizing] (610 aa).

The Nucleophile; for GATase activity role is filled by cysteine 2. Residues 2–217 (CGIVGYVGQK…DKEFVVLTND (216 aa)) form the Glutamine amidotransferase type-2 domain. SIS domains lie at 284-424 (ITKE…LKGS) and 453-600 (LIKE…VDKP). Lysine 605 (for Fru-6P isomerization activity) is an active-site residue.

In terms of assembly, homodimer.

It is found in the cytoplasm. It catalyses the reaction D-fructose 6-phosphate + L-glutamine = D-glucosamine 6-phosphate + L-glutamate. In terms of biological role, catalyzes the first step in hexosamine metabolism, converting fructose-6P into glucosamine-6P using glutamine as a nitrogen source. This Clostridium perfringens (strain 13 / Type A) protein is Glutamine--fructose-6-phosphate aminotransferase [isomerizing].